Consider the following 232-residue polypeptide: Clarin-2 (232 aa).

The next 4 membrane-spanning stretches (helical) occupy residues Val8–Leu28, Ile101–Leu121, Leu139–Val159, and Ser188–Ile208.

It belongs to the clarin family. As to expression, detected in inner ear, particularly in hair bundles of auditory hair cells and is enriched in apical stereocilia. Detected in eye, but not in brain or muscle.

It is found in the cell projection. The protein localises to the stereocilium membrane. Its function is as follows. Plays a key role to hearing function. Required for normal organization and maintenance of the stereocilia bundle and for mechano-electrical transduction. This Mus musculus (Mouse) protein is Clarin-2.